Here is a 189-residue protein sequence, read N- to C-terminus: Peptidyl-tRNA hydrolase (189 aa).

Tyrosine 15 serves as a coordination point for tRNA. The active-site Proton acceptor is the histidine 20. 3 residues coordinate tRNA: phenylalanine 66, asparagine 68, and asparagine 114.

It belongs to the PTH family. As to quaternary structure, monomer.

It is found in the cytoplasm. The enzyme catalyses an N-acyl-L-alpha-aminoacyl-tRNA + H2O = an N-acyl-L-amino acid + a tRNA + H(+). Hydrolyzes ribosome-free peptidyl-tRNAs (with 1 or more amino acids incorporated), which drop off the ribosome during protein synthesis, or as a result of ribosome stalling. In terms of biological role, catalyzes the release of premature peptidyl moieties from peptidyl-tRNA molecules trapped in stalled 50S ribosomal subunits, and thus maintains levels of free tRNAs and 50S ribosomes. This is Peptidyl-tRNA hydrolase from Streptococcus pneumoniae (strain JJA).